We begin with the raw amino-acid sequence, 1538 residues long: Phenolphthiocerol/phthiocerol polyketide synthase subunit B (1538 aa).

Residues Ala-33 to Gln-455 form the Ketosynthase family 3 (KS3) domain. Catalysis depends on for beta-ketoacyl synthase activity residues Cys-205, His-340, and His-377. The acyltransferase stretch occupies residues Asp-553–His-882. Residue Ser-649 is the For malonyltransferase activity of the active site. Residue Ser-1153 to Leu-1196 participates in NADP(+) binding. A beta-ketoacyl reductase region spans residues Ser-1153–Ser-1328. Positions Asp-1423–Leu-1498 constitute a Carrier domain. Position 1458 is an O-(pantetheine 4'-phosphoryl)serine (Ser-1458).

It depends on NADP(+) as a cofactor. Pantetheine 4'-phosphate is required as a cofactor.

It carries out the reaction icosanoyl-[(phenol)carboxyphthiodiolenone synthase] + 2 (S)-methylmalonyl-CoA + 3 malonyl-CoA + 5 NADPH + 10 H(+) = C32-carboxyphthiodiolenone-[(phenol)carboxyphthiodiolenone synthase] + 5 CO2 + 5 NADP(+) + 5 CoA + 2 H2O. It catalyses the reaction docosanoyl-[(phenol)carboxyphthiodiolenone synthase] + 2 (S)-methylmalonyl-CoA + 3 malonyl-CoA + 5 NADPH + 10 H(+) = C34-carboxyphthiodiolenone-[(phenol)carboxyphthiodiolenone synthase] + 5 CO2 + 5 NADP(+) + 5 CoA + 2 H2O. The enzyme catalyses 17-(4-hydroxyphenyl)heptadecanoyl-[(phenol)carboxyphthiodiolenone synthase] + 2 (S)-methylmalonyl-CoA + 3 malonyl-CoA + 5 NADPH + 10 H(+) = C35-(phenol)carboxyphthiodiolenone-[(phenol)carboxyphthiodiolenone synthase] + 5 CO2 + 5 NADP(+) + 5 CoA + 2 H2O. The catalysed reaction is 19-(4-hydroxyphenyl)nonadecanoyl-[(phenol)carboxyphthiodiolenone synthase] + 2 (S)-methylmalonyl-CoA + 3 malonyl-CoA + 5 NADPH + 10 H(+) = C37-(phenol)carboxyphthiodiolenone-[(phenol)carboxyphthiodiolenone synthase] + 5 CO2 + 5 NADP(+) + 5 CoA + 2 H2O. It functions in the pathway lipid metabolism; fatty acid biosynthesis. Functionally, part of the PpsABCDE complex involved in the biosynthesis of the lipid core common to phthiocerols and phenolphthiocerols by successive additions of malonyl-CoA or methylmalonyl-CoA extender units. PpsA can accept as substrate the activated forms of either icosanoyl (C20), docosanoyl (C22) or lignoceroyl (C24) groups from FadD26, or a (4-hydroxyphenyl)-C17 or (4-hydroxyphenyl)-C19 fatty acyl from FadD29. PpsA initiates the biosynthesis and extends its substrate using a malonyl-CoA extender unit. The PpsB and PpsC proteins add the second and third malonyl-CoA extender units. PpsD adds an (R)-methylmalonyl unit and PpsE adds a second (R)-methylmalonyl unit. The incorporation of the methylmalonyl units results in formation of two branched methyl groups in the elongated product. This is Phenolphthiocerol/phthiocerol polyketide synthase subunit B (ppsB) from Mycobacterium tuberculosis (strain CDC 1551 / Oshkosh).